We begin with the raw amino-acid sequence, 56 residues long: Preprotein translocase subunit SecG (56 aa).

Residues 1 to 29 (MAKEKATLPPTGAGLMRFFDEDTKAVKIS) are Cytoplasmic-facing. The helical transmembrane segment at 30-51 (PRGVIALTLILVALEILLHAFG) threads the bilayer. The Extracellular portion of the chain corresponds to 52–56 (PQIFG).

Belongs to the SEC61-beta family. In terms of assembly, component of the protein translocase complex. Heterotrimer consisting of alpha (SecY), beta (SecG) and gamma (SecE) subunits. Can form oligomers of the heterotrimer.

The protein resides in the cell membrane. Functionally, involved in protein export. The function of the beta subunit is unknown, but it may be involved in stabilization of the trimeric complex. This Thermococcus onnurineus (strain NA1) protein is Preprotein translocase subunit SecG.